We begin with the raw amino-acid sequence, 264 residues long: S-adenosylmethionine decarboxylase proenzyme (264 aa).

Ser112 functions as the Schiff-base intermediate with substrate; via pyruvic acid in the catalytic mechanism. Pyruvic acid (Ser); by autocatalysis is present on Ser112. Residue His117 is the Proton acceptor; for processing activity of the active site. The active-site Proton donor; for catalytic activity is the Cys140.

This sequence belongs to the prokaryotic AdoMetDC family. Type 2 subfamily. As to quaternary structure, heterooctamer of four alpha and four beta chains arranged as a tetramer of alpha/beta heterodimers. The cofactor is pyruvate. Is synthesized initially as an inactive proenzyme. Formation of the active enzyme involves a self-maturation process in which the active site pyruvoyl group is generated from an internal serine residue via an autocatalytic post-translational modification. Two non-identical subunits are generated from the proenzyme in this reaction, and the pyruvate is formed at the N-terminus of the alpha chain, which is derived from the carboxyl end of the proenzyme. The post-translation cleavage follows an unusual pathway, termed non-hydrolytic serinolysis, in which the side chain hydroxyl group of the serine supplies its oxygen atom to form the C-terminus of the beta chain, while the remainder of the serine residue undergoes an oxidative deamination to produce ammonia and the pyruvoyl group blocking the N-terminus of the alpha chain.

It carries out the reaction S-adenosyl-L-methionine + H(+) = S-adenosyl 3-(methylsulfanyl)propylamine + CO2. It functions in the pathway amine and polyamine biosynthesis; S-adenosylmethioninamine biosynthesis; S-adenosylmethioninamine from S-adenosyl-L-methionine: step 1/1. Functionally, catalyzes the decarboxylation of S-adenosylmethionine to S-adenosylmethioninamine (dcAdoMet), the propylamine donor required for the synthesis of the polyamines spermine and spermidine from the diamine putrescine. In Pectobacterium atrosepticum (strain SCRI 1043 / ATCC BAA-672) (Erwinia carotovora subsp. atroseptica), this protein is S-adenosylmethionine decarboxylase proenzyme.